The sequence spans 289 residues: 4-hydroxy-tetrahydrodipicolinate synthase (289 aa).

Residue threonine 43 coordinates pyruvate. Residue tyrosine 131 is the Proton donor/acceptor of the active site. Lysine 160 acts as the Schiff-base intermediate with substrate in catalysis. Residue isoleucine 200 participates in pyruvate binding.

It belongs to the DapA family. As to quaternary structure, homotetramer; dimer of dimers.

Its subcellular location is the cytoplasm. The enzyme catalyses L-aspartate 4-semialdehyde + pyruvate = (2S,4S)-4-hydroxy-2,3,4,5-tetrahydrodipicolinate + H2O + H(+). The protein operates within amino-acid biosynthesis; L-lysine biosynthesis via DAP pathway; (S)-tetrahydrodipicolinate from L-aspartate: step 3/4. Its function is as follows. Catalyzes the condensation of (S)-aspartate-beta-semialdehyde [(S)-ASA] and pyruvate to 4-hydroxy-tetrahydrodipicolinate (HTPA). This Methanococcus vannielii (strain ATCC 35089 / DSM 1224 / JCM 13029 / OCM 148 / SB) protein is 4-hydroxy-tetrahydrodipicolinate synthase.